A 137-amino-acid polypeptide reads, in one-letter code: Large ribosomal subunit protein uL16 (137 aa).

Belongs to the universal ribosomal protein uL16 family. In terms of assembly, part of the 50S ribosomal subunit.

Functionally, binds 23S rRNA and is also seen to make contacts with the A and possibly P site tRNAs. The protein is Large ribosomal subunit protein uL16 of Psychrobacter sp. (strain PRwf-1).